The primary structure comprises 869 residues: Dimethylglycine dehydrogenase, mitochondrial (869 aa).

The N-terminal 43 residues, 1–43, are a transit peptide targeting the mitochondrion; that stretch reads MLRPGALRLRGLALRGSPRRPSSAGLREGQESPASPPEWKDRA. The segment at 14-39 is disordered; sequence LRGSPRRPSSAGLREGQESPASPPEW. Residues 52-53, 73-74, and 80-88 contribute to the FAD site; these read CV, EK, and GSTWHAAGL. Position 84 is a tele-8alpha-FAD histidine (histidine 84). Lysine 107 is subject to N6-acetyllysine. Position 141 is an N6-acetyllysine; alternate (lysine 141). Lysine 141 bears the N6-succinyllysine; alternate mark. Lysine 161 carries the post-translational modification N6-acetyllysine. Valine 212 contacts FAD. N6-acetyllysine is present on lysine 216. Tryptophan 244 contributes to the FAD binding site. An N6-succinyllysine mark is found at lysine 310 and lysine 312. Residues lysine 328 and lysine 353 each carry the N6-acetyllysine modification. 390–395 is a binding site for FAD; sequence FGYGII. N6-acetyllysine; alternate is present on residues lysine 427, lysine 469, and lysine 516. An N6-succinyllysine; alternate mark is found at lysine 427, lysine 469, and lysine 516. Residue 573-575 participates in (6S)-5,6,7,8-tetrahydrofolate binding; it reads ELT. An N6-acetyllysine; alternate modification is found at lysine 648. The residue at position 648 (lysine 648) is an N6-succinyllysine; alternate. (6S)-5,6,7,8-tetrahydrofolate-binding positions include tyrosine 669, 676 to 678, and tyrosine 737; that span reads ELY. Lysine 757 bears the N6-acetyllysine mark. Lysine 786 carries the post-translational modification N6-acetyllysine; alternate. Lysine 786 is subject to N6-succinyllysine; alternate. At lysine 788 the chain carries N6-succinyllysine.

Belongs to the GcvT family. FAD is required as a cofactor.

It is found in the mitochondrion. The catalysed reaction is (6S)-5,6,7,8-tetrahydrofolyl-(gamma-L-Glu)(n) + N,N-dimethylglycine + oxidized [electron-transfer flavoprotein] + H(+) = (6R)-5,10-methylenetetrahydrofolyl-(gamma-L-Glu)(n) + sarcosine + reduced [electron-transfer flavoprotein]. It functions in the pathway amine and polyamine degradation; betaine degradation; sarcosine from betaine: step 2/2. Its function is as follows. Catalyzes the demethylation of N,N-dimethylglycine to sarcosine. Also has activity with sarcosine in vitro. In Mus musculus (Mouse), this protein is Dimethylglycine dehydrogenase, mitochondrial (Dmgdh).